A 660-amino-acid polypeptide reads, in one-letter code: Chaperone protein DnaK (660 aa).

At threonine 201 the chain carries Phosphothreonine; by autocatalysis. The disordered stretch occupies residues 599-660; that stretch reads EAMQAQSASA…ADVEIVDKPE (62 aa). The span at 600–617 shows a compositional bias: low complexity; that stretch reads AMQAQSASAAASSAANAQ.

This sequence belongs to the heat shock protein 70 family.

Functionally, acts as a chaperone. The sequence is that of Chaperone protein DnaK from Chlamydia trachomatis serovar A (strain ATCC VR-571B / DSM 19440 / HAR-13).